A 240-amino-acid chain; its full sequence is Biosynthetic peptidoglycan transglycosylase (240 aa).

Residues 15–35 (WMVYLGAVVAIAWLATQAFYF) form a helical membrane-spanning segment.

The protein belongs to the glycosyltransferase 51 family.

The protein localises to the cell inner membrane. It catalyses the reaction [GlcNAc-(1-&gt;4)-Mur2Ac(oyl-L-Ala-gamma-D-Glu-L-Lys-D-Ala-D-Ala)](n)-di-trans,octa-cis-undecaprenyl diphosphate + beta-D-GlcNAc-(1-&gt;4)-Mur2Ac(oyl-L-Ala-gamma-D-Glu-L-Lys-D-Ala-D-Ala)-di-trans,octa-cis-undecaprenyl diphosphate = [GlcNAc-(1-&gt;4)-Mur2Ac(oyl-L-Ala-gamma-D-Glu-L-Lys-D-Ala-D-Ala)](n+1)-di-trans,octa-cis-undecaprenyl diphosphate + di-trans,octa-cis-undecaprenyl diphosphate + H(+). The protein operates within cell wall biogenesis; peptidoglycan biosynthesis. In terms of biological role, peptidoglycan polymerase that catalyzes glycan chain elongation from lipid-linked precursors. The protein is Biosynthetic peptidoglycan transglycosylase of Paraburkholderia phytofirmans (strain DSM 17436 / LMG 22146 / PsJN) (Burkholderia phytofirmans).